The primary structure comprises 553 residues: Solute carrier family 45 member 3 (553 aa).

Helical transmembrane passes span 19–39 (LLVNLLTFGLEVCLAAGITYV), 52–72 (FMTMVLGIGPVLGLVCVPLLG), 88–108 (FIWALSLGILLSLFLIPRAGW), 120–140 (LELALLILGVGLLDFCGQVCF), 161–181 (YSVYAFMISLGGCLGYLLPAI), 198–218 (CLFGLLTLIFLTCVAATLLVA), 275–295 (FVAELCSWMALMTFTLFYTDF), 323–343 (MGSLGLFLQCAISLVFSLVMD), 353–373 (AVYLASVAAFPVAAGATCLSH), 382–402 (AALTGFTFSALQILPYTLASL), and 522–542 (AYMVSAAGLGLVAIYFATQVV).

This sequence belongs to the glycoside-pentoside-hexuronide (GPH) cation symporter transporter (TC 2.A.2) family. In terms of tissue distribution, prostate specific. Expressed in all prostatic glandular cells. Expressed both in normal and cancerous prostates.

It is found in the membrane. The catalysed reaction is sucrose(out) + H(+)(out) = sucrose(in) + H(+)(in). Functionally, proton-associated sucrose transporter. May be able to transport also glucose and fructose. The chain is Solute carrier family 45 member 3 from Homo sapiens (Human).